We begin with the raw amino-acid sequence, 32 residues long: Periplasmic [NiFeSe] hydrogenase small subunit (32 aa).

2 residues coordinate [4Fe-4S] cluster: C18 and C21.

It belongs to the [NiFe]/[NiFeSe] hydrogenase small subunit family. Heterodimer of a large and a small subunit. The cofactor is [3Fe-4S] cluster. [4Fe-4S] cluster is required as a cofactor.

It is found in the periplasm. The catalysed reaction is H2 + A = AH2. In Desulfomicrobium norvegicum (strain DSM 1741 / NCIMB 8310) (Desulfovibrio baculatus (strain Norway 4)), this protein is Periplasmic [NiFeSe] hydrogenase small subunit.